The chain runs to 284 residues: Small ribosomal subunit protein uS5z (284 aa).

Over residues 1 to 19 (MAERGGEGGAERGGDRGDF) the composition is skewed to basic and acidic residues. Residues 1–51 (MAERGGEGGAERGGDRGDFGRGFGGGRGGGRGRDRGPRGRGRRGGRASEET) are disordered. Residues 20–29 (GRGFGGGRGG) are compositionally biased toward gly residues. In terms of domain architecture, S5 DRBM spans 95–158 (LKDEVMKIMP…ILAKLSVVPV (64 aa)).

Belongs to the universal ribosomal protein uS5 family.

This chain is Small ribosomal subunit protein uS5z (RPS2A), found in Arabidopsis thaliana (Mouse-ear cress).